The sequence spans 246 residues: NAD-dependent protein deacylase (246 aa).

The Deacetylase sirtuin-type domain occupies 1–245 (MKEFITKHRD…ELIREILDNP (245 aa)). Position 20–39 (20–39 (GAGISAESGIPTFRGSEGLW)) interacts with NAD(+). 2 residues coordinate substrate: Tyr-64 and Arg-67. 98 to 101 (QNVD) lines the NAD(+) pocket. His-116 functions as the Proton acceptor in the catalytic mechanism. Zn(2+)-binding residues include Cys-124, Cys-127, Cys-146, and Cys-149. NAD(+)-binding positions include 186 to 188 (GTS), 212 to 214 (NPE), and Thr-230.

Belongs to the sirtuin family. Class III subfamily. The cofactor is Zn(2+).

It localises to the cytoplasm. It carries out the reaction N(6)-acetyl-L-lysyl-[protein] + NAD(+) + H2O = 2''-O-acetyl-ADP-D-ribose + nicotinamide + L-lysyl-[protein]. The enzyme catalyses N(6)-succinyl-L-lysyl-[protein] + NAD(+) + H2O = 2''-O-succinyl-ADP-D-ribose + nicotinamide + L-lysyl-[protein]. Functionally, NAD-dependent lysine deacetylase and desuccinylase that specifically removes acetyl and succinyl groups on target proteins. Modulates the activities of several proteins which are inactive in their acylated form. This Leptospira interrogans serogroup Icterohaemorrhagiae serovar Lai (strain 56601) protein is NAD-dependent protein deacylase.